A 248-amino-acid polypeptide reads, in one-letter code: Probable phosphatase VS_II0429 (248 aa).

Zn(2+)-binding residues include His8, His10, His16, His41, Glu74, His102, His132, Asp194, and His196.

The protein belongs to the PHP family. The cofactor is Zn(2+).

The polypeptide is Probable phosphatase VS_II0429 (Vibrio atlanticus (strain LGP32) (Vibrio splendidus (strain Mel32))).